The sequence spans 664 residues: Peroxisomal acyl-coenzyme A oxidase 1 (664 aa).

FAD-binding residues include Tyr-135, Gln-137, Thr-138, Ser-144, Gly-177, Arg-310, Gln-330, Arg-333, Gly-401, and Thr-422. Glu-424 (proton acceptor) is an active-site residue. FAD is bound at residue Asp-426. Cys-467 and Cys-576 are oxidised to a cystine. Positions 662–664 match the Microbody targeting signal motif; it reads ARL.

This sequence belongs to the acyl-CoA oxidase family. As to quaternary structure, homodimer. The cofactor is FAD. As to expression, expressed mainly in flowers and young seedlings. Lower expression in roots, leaves and bracts.

Its subcellular location is the peroxisome. It catalyses the reaction a 2,3-saturated acyl-CoA + O2 = a (2E)-enoyl-CoA + H2O2. Its function is as follows. Catalyzes the desaturation of both long- and medium-chain acyl-CoAs to 2-trans-enoyl-CoAs. Most active with C14-CoA. Activity on long-chain mono-unsaturated substrates is 40% higher than with the corresponding saturated substrates. Seems to be an important factor in the general metabolism of root tips. May be involved in the biosynthesis of jasmonic acid. In Arabidopsis thaliana (Mouse-ear cress), this protein is Peroxisomal acyl-coenzyme A oxidase 1.